The following is a 135-amino-acid chain: Ribonuclease P protein component (135 aa).

This sequence belongs to the RnpA family. In terms of assembly, consists of a catalytic RNA component (M1 or rnpB) and a protein subunit.

It carries out the reaction Endonucleolytic cleavage of RNA, removing 5'-extranucleotides from tRNA precursor.. RNaseP catalyzes the removal of the 5'-leader sequence from pre-tRNA to produce the mature 5'-terminus. It can also cleave other RNA substrates such as 4.5S RNA. The protein component plays an auxiliary but essential role in vivo by binding to the 5'-leader sequence and broadening the substrate specificity of the ribozyme. The polypeptide is Ribonuclease P protein component (Xylella fastidiosa (strain 9a5c)).